Reading from the N-terminus, the 290-residue chain is 4-hydroxybenzoate octaprenyltransferase (290 aa).

The next 8 membrane-spanning stretches (helical) occupy residues 21 to 41 (IGTM…ADGM), 44 to 64 (LRVL…GCII), 97 to 117 (LFVV…PLVV), 143 to 163 (FLGV…TGEV), 168 to 188 (WWLF…YAMV), 211 to 231 (EIIG…GWSG), 235 to 255 (LLYG…QRLI), and 270 to 290 (NNWA…FAAL).

Belongs to the UbiA prenyltransferase family. Mg(2+) serves as cofactor.

The protein localises to the cell inner membrane. It carries out the reaction all-trans-octaprenyl diphosphate + 4-hydroxybenzoate = 4-hydroxy-3-(all-trans-octaprenyl)benzoate + diphosphate. It functions in the pathway cofactor biosynthesis; ubiquinone biosynthesis. Its function is as follows. Catalyzes the prenylation of para-hydroxybenzoate (PHB) with an all-trans polyprenyl group. Mediates the second step in the final reaction sequence of ubiquinone-8 (UQ-8) biosynthesis, which is the condensation of the polyisoprenoid side chain with PHB, generating the first membrane-bound Q intermediate 3-octaprenyl-4-hydroxybenzoate. In Shewanella amazonensis (strain ATCC BAA-1098 / SB2B), this protein is 4-hydroxybenzoate octaprenyltransferase.